The primary structure comprises 419 residues: Maltoporin 2 (419 aa).

The signal sequence occupies residues 1–23 (MKTSLRTLSVALAAALVSPSVLA).

Belongs to the porin LamB (TC 1.B.3) family. Homotrimer formed of three 18-stranded antiparallel beta-barrels, containing three independent channels.

The protein localises to the cell outer membrane. The enzyme catalyses beta-maltose(in) = beta-maltose(out). Involved in the transport of maltose and maltodextrins. The protein is Maltoporin 2 of Yersinia pestis bv. Antiqua (strain Antiqua).